Reading from the N-terminus, the 313-residue chain is Hydroxyphenylpyruvate reductase (313 aa).

Residues leucine 152–isoleucine 155, serine 174–serine 176, and isoleucine 230 contribute to the NADP(+) site. Arginine 232 is a catalytic residue. Residue aspartate 256 coordinates NADP(+). The active site involves glutamate 261. Histidine 279 serves as the catalytic Proton donor.

Belongs to the D-isomer specific 2-hydroxyacid dehydrogenase family.

The enzyme catalyses (2R)-2-hydroxy-3-(4-hydroxyphenyl)propanoate + NAD(+) = 3-(4-hydroxyphenyl)pyruvate + NADH + H(+). The catalysed reaction is (2R)-2-hydroxy-3-(4-hydroxyphenyl)propanoate + NADP(+) = 3-(4-hydroxyphenyl)pyruvate + NADPH + H(+). It catalyses the reaction (2R)-3-(3,4-dihydroxyphenyl)lactate + NADP(+) = 3-(3,4-dihydroxyphenyl)pyruvate + NADPH + H(+). It carries out the reaction (2R)-3-(3,4-dihydroxyphenyl)lactate + NAD(+) = 3-(3,4-dihydroxyphenyl)pyruvate + NADH + H(+). Its function is as follows. Catalyzes the NAD(P)H-dependent reduction of 4-hydroxyphenylpyruvate to 4-hydroxyphenyllactate and 3,4-dihydroxyphenylpyruvate to 3,4-dihydroxyphenyllactate in the biosynthesis of rosmarinic acid. Rosmarinic acid is an ester of caffeic acid and 3,4-dihydroxyphenyllactic acid. NADP is the preferred substrate. The polypeptide is Hydroxyphenylpyruvate reductase (HPPR) (Plectranthus scutellarioides (Coleus)).